We begin with the raw amino-acid sequence, 124 residues long: Protein TAR1 (124 aa).

The segment at 80–124 (KNRTPRHTGFSPSMTSCSKEHRQGTAPKLPSPNYNSGTEGTRFQI) is disordered. Residues 111-124 (PNYNSGTEGTRFQI) show a composition bias toward polar residues.

It is found in the mitochondrion. Functionally, may be involved in mtDNA stability or mitochondrial gene expression regulation at the post-transcriptional level. The sequence is that of Protein TAR1 (TAR1) from Saccharomyces cerevisiae (strain ATCC 204508 / S288c) (Baker's yeast).